Consider the following 375-residue polypeptide: Coproporphyrin III ferrochelatase (375 aa).

Fe-coproporphyrin III contacts are provided by S59 and Y128. Positions 191 and 286 each coordinate Fe(2+).

Belongs to the ferrochelatase family.

The protein resides in the cytoplasm. The enzyme catalyses Fe-coproporphyrin III + 2 H(+) = coproporphyrin III + Fe(2+). It functions in the pathway porphyrin-containing compound metabolism; protoheme biosynthesis. In terms of biological role, involved in coproporphyrin-dependent heme b biosynthesis. Catalyzes the insertion of ferrous iron into coproporphyrin III to form Fe-coproporphyrin III. In Streptomyces coelicolor (strain ATCC BAA-471 / A3(2) / M145), this protein is Coproporphyrin III ferrochelatase.